The following is an 857-amino-acid chain: Facilitated trehalose transporter Tret1-1 (857 aa).

2 disordered regions span residues 1–28 (MSGRDSRGAGGGGGGHQPLSNAMGKLKE) and 62–203 (DPFL…KATS). At 1 to 392 (MSGRDSRGAG…VYRPTTNPIY (392 aa)) the chain is on the cytoplasmic side. Over residues 69 to 81 (VSPQRHPQNTVRT) the composition is skewed to polar residues. Residues 134-143 (EIREHRDRQQ) show a composition bias toward basic and acidic residues. A compositionally biased stretch (polar residues) spans 171-181 (GNSNTNSNKAA). Residues Ser-248, Ser-249, Ser-250, Ser-320, and Ser-322 each carry the phosphoserine modification. The segment at 327–346 (LTSRQHFQQQRSISTDSRKS) is disordered. Positions 330 to 341 (RQHFQQQRSIST) are enriched in polar residues. The helical transmembrane segment at 393–413 (IWTQVLAALSVSLGSLVVGFV) threads the bilayer. Over 414–440 (SAYTSPALVSMTDRNITSFEVTQDAGS) the chain is Extracellular. Asn-428 is a glycosylation site (N-linked (GlcNAc...) asparagine). The helical transmembrane segment at 441-461 (WVGGIMPLAGLAGGIAGGPLI) threads the bilayer. Over 462–473 (EYLGRRNTILAT) the chain is Cytoplasmic. Residues 474 to 494 (AVPFIVSSLLIACAVNVAMVL) form a helical membrane-spanning segment. The Extracellular portion of the chain corresponds to 495-497 (CGR). A helical membrane pass occupies residues 498-518 (FLAGFCVGIASLSLPVYLGET). The Cytoplasmic portion of the chain corresponds to 519 to 528 (VQPEVRGTLG). The helical transmembrane segment at 529–549 (LLPTAFGNIGILLCFVAGSFM) threads the bilayer. Residue Asn-550 is glycosylated (N-linked (GlcNAc...) asparagine). Over 550–552 (NWS) the chain is Extracellular. Residues 553-573 (MLAFLGAALPVPFLILMFLIP) traverse the membrane as a helical segment. Topologically, residues 574–636 (ETPRWFVGRG…ELFKRINLKP (63 aa)) are cytoplasmic. A helical membrane pass occupies residues 637–657 (LSISLGLMFFQQFSGINAVIF). The Extracellular portion of the chain corresponds to 658-673 (YTVQIFKDAGSTIDSN). The chain crosses the membrane as a helical span at residues 674-694 (LCTIIVGIVNFFATFMGILLI). Topologically, residues 695-700 (DRLGRK) are cytoplasmic. Residues 701-721 (ILLYISDIAMILTLSILGGFF) traverse the membrane as a helical segment. Topologically, residues 722-740 (YCKAHGPDVSHLGWLPLTC) are extracellular. The helical transmembrane segment at 741–761 (FVIYILGFSLGFGPIPWLMMG) threads the bilayer. The Cytoplasmic portion of the chain corresponds to 762 to 770 (EILPAKIRG). A helical transmembrane segment spans residues 771-791 (PAASVVTAFNWFCTFVVTKTF). At 792–801 (QDLTGAMGAH) the chain is on the extracellular side. A helical transmembrane segment spans residues 802-822 (GAFWLFGAICFVGLFFVIIYV). Topologically, residues 823 to 857 (PETQGKTLEDIERKMMGRVRRMSSVANIKPLSFNM) are cytoplasmic. Residues Ser-845 and Ser-846 each carry the phosphoserine modification.

This sequence belongs to the major facilitator superfamily. Sugar transporter (TC 2.A.1.1) family. Trehalose transporter subfamily.

It is found in the cell membrane. In terms of biological role, low-capacity facilitative transporter for trehalose. Does not transport maltose, sucrose or lactose. Mediates the bidirectional transfer of trehalose. Responsible for the transport of trehalose synthesized in the fat body and the incorporation of trehalose into other tissues that require a carbon source, thereby regulating trehalose levels in the hemolymph. This Drosophila simulans (Fruit fly) protein is Facilitated trehalose transporter Tret1-1.